Reading from the N-terminus, the 308-residue chain is Protease HtpX homolog (308 aa).

A run of 2 helical transmembrane segments spans residues leucine 16–valine 36 and tyrosine 39–methionine 59. A Zn(2+)-binding site is contributed by histidine 149. Residue glutamate 150 is part of the active site. A Zn(2+)-binding site is contributed by histidine 153. 2 helical membrane-spanning segments follow: residues valine 161–phenylalanine 181 and isoleucine 192–valine 212. Glutamate 217 provides a ligand contact to Zn(2+).

This sequence belongs to the peptidase M48B family. Zn(2+) serves as cofactor.

It localises to the cell membrane. The polypeptide is Protease HtpX homolog (Thermoplasma volcanium (strain ATCC 51530 / DSM 4299 / JCM 9571 / NBRC 15438 / GSS1)).